Consider the following 97-residue polypeptide: Transcription and mRNA export factor SUS1 (97 aa).

The protein belongs to the ENY2 family. Component of the nuclear pore complex (NPC)-associated TREX-2 complex (transcription and export complex 2), composed of at least SUS1, SAC3, THP1, SEM1, and CDC31. TREX-2 contains 2 SUS1 chains. The TREX-2 complex interacts with the nucleoporin NUP1. Component of the 1.8 MDa SAGA transcription coactivator-HAT complex. SAGA is built of 5 distinct domains with specialized functions. Within the SAGA complex, SUS1, SGF11, SGF73 and UBP8 form an additional subcomplex of SAGA called the DUB module (deubiquitination module). Interacts directly with THP1, SAC3, SGF11, and with the RNA polymerase II.

It localises to the nucleus. The protein localises to the nucleoplasm. The protein resides in the cytoplasm. Its subcellular location is the P-body. In terms of biological role, involved in mRNA export coupled transcription activation by association with both the TREX-2 and the SAGA complexes. At the promoters, SAGA is required for recruitment of the basal transcription machinery. It influences RNA polymerase II transcriptional activity through different activities such as TBP interaction and promoter selectivity, interaction with transcription activators, and chromatin modification through histone acetylation and deubiquitination. Within the SAGA complex, participates in a subcomplex required for deubiquitination of H2B and for the maintenance of steady-state H3 methylation levels. The TREX-2 complex functions in docking export-competent ribonucleoprotein particles (mRNPs) to the nuclear entrance of the nuclear pore complex (nuclear basket). TREX-2 participates in mRNA export and accurate chromatin positioning in the nucleus by tethering genes to the nuclear periphery. May also be involved in cytoplasmic mRNA decay by interaction with components of P-bodies. The sequence is that of Transcription and mRNA export factor SUS1 from Meyerozyma guilliermondii (strain ATCC 6260 / CBS 566 / DSM 6381 / JCM 1539 / NBRC 10279 / NRRL Y-324) (Yeast).